The sequence spans 159 residues: Olfactory receptor-like protein COR8 (159 aa).

The Cytoplasmic portion of the chain corresponds to 1–16 (VAICNPLLYTISMPKS). Residues 17–41 (LCMKLVAGSYLGGVLNSLTQTCCLL) form a helical membrane-spanning segment. Over 42-82 (PLPFCGPNVINHYFCDTNPLLKLTCSDGRLNELLLVTFNGT) the chain is Extracellular. Residue asparagine 80 is glycosylated (N-linked (GlcNAc...) asparagine). Residues 83–103 (ISMTVLLIIVISYVYILVSIL) form a helical membrane-spanning segment. The Cytoplasmic segment spans residues 104-116 (SIRSARGRHKAFS). The helical transmembrane segment at 117–137 (TCASHLLTVTLFYVPAGLSHM) threads the bilayer. The Extracellular portion of the chain corresponds to 138–148 (QPGSKYSLDME). A helical transmembrane segment spans residues 149-159 (KVTAVFYTLLV).

The protein belongs to the G-protein coupled receptor 1 family.

The protein localises to the cell membrane. Its function is as follows. Odorant receptor. In Gallus gallus (Chicken), this protein is Olfactory receptor-like protein COR8 (COR8).